The primary structure comprises 355 residues: D-alanine--D-alanine ligase (355 aa).

Residues 143-350 (KIIFSNLKIP…IEQLVAKLVD (208 aa)) form the ATP-grasp domain. Residue 178 to 233 (LKKLNFPVFVKPSNSGSSLGISKVINKSEIIPALEKARGIDPSILIEEGLEVREIE) coordinates ATP. Residues Asp-303, Glu-317, and Asn-319 each contribute to the Mg(2+) site.

It belongs to the D-alanine--D-alanine ligase family. It depends on Mg(2+) as a cofactor. Mn(2+) is required as a cofactor.

The protein resides in the cytoplasm. It catalyses the reaction 2 D-alanine + ATP = D-alanyl-D-alanine + ADP + phosphate + H(+). Its pathway is cell wall biogenesis; peptidoglycan biosynthesis. Functionally, cell wall formation. The polypeptide is D-alanine--D-alanine ligase (Prochlorococcus marinus (strain AS9601)).